The sequence spans 320 residues: GRAM domain-containing protein 2A (320 aa).

The tract at residues 33-56 is disordered; sequence TEKPGKVQEPPDDGSLHWSEGSKG. The 68-residue stretch at 74–141 folds into the GRAM domain; sequence QQYHKLFKDI…VSVQLIKKHK (68 aa). Residues 278–298 traverse the membrane as a helical segment; it reads LLKVIFVMICFLVLSSSYLAF.

In terms of processing, phosphorylated.

Its subcellular location is the endoplasmic reticulum membrane. It localises to the cell membrane. In terms of biological role, participates in the organization ofendoplasmic reticulum-plasma membrane contact sites (EPCS) with pleiotropic functions including STIM1 recruitment and calcium homeostasis. Constitutive tether that co-localize with ESYT2/3 tethers at endoplasmic reticulum-plasma membrane contact sites in a phosphatidylinositol lipid-dependent manner. Pre-marks the subset of phosphtidylinositol 4,5-biphosphate (PI(4,5)P2)-enriched EPCS destined for the store operated calcium entry pathway (SOCE). The polypeptide is GRAM domain-containing protein 2A (Mus musculus (Mouse)).